Reading from the N-terminus, the 158-residue chain is Cyclic pyranopterin monophosphate synthase (158 aa).

Residues 74 to 76 (MCH) and 112 to 113 (ME) contribute to the substrate site. The active site involves aspartate 127.

The protein belongs to the MoaC family. As to quaternary structure, homohexamer; trimer of dimers.

The enzyme catalyses (8S)-3',8-cyclo-7,8-dihydroguanosine 5'-triphosphate = cyclic pyranopterin phosphate + diphosphate. Its pathway is cofactor biosynthesis; molybdopterin biosynthesis. Functionally, catalyzes the conversion of (8S)-3',8-cyclo-7,8-dihydroguanosine 5'-triphosphate to cyclic pyranopterin monophosphate (cPMP). The chain is Cyclic pyranopterin monophosphate synthase from Helicobacter pylori (strain Shi470).